Reading from the N-terminus, the 138-residue chain is Large-conductance mechanosensitive channel (138 aa).

2 helical membrane passes run 19 to 39 (VGVIIGAAFGAIVTSLVGDVI) and 81 to 101 (GSFLTLTINFIIIAFVLFLVI).

The protein belongs to the MscL family. As to quaternary structure, homopentamer.

It is found in the cell inner membrane. Channel that opens in response to stretch forces in the membrane lipid bilayer. May participate in the regulation of osmotic pressure changes within the cell. The chain is Large-conductance mechanosensitive channel from Bradyrhizobium diazoefficiens (strain JCM 10833 / BCRC 13528 / IAM 13628 / NBRC 14792 / USDA 110).